The primary structure comprises 386 residues: ADP,ATP carrier protein, mitochondrial (386 aa).

The N-terminal 77 residues, 1–77 (MADMNQHPTV…SNASPVFVQA (77 aa)), are a transit peptide targeting the mitochondrion. 3 Solcar repeats span residues 84-177 (AAFA…FKRL), 189-281 (KWFA…LKPV), and 289-375 (DSFF…LQVL). 5 consecutive transmembrane segments (helical) span residues 86–113 (FATDFLMGGVSAAVSKTAAAPIERVKLL), 154–178 (TANVIRYFPTQALNFAFKDYFKRLF), 187–207 (YWKWFAGNLASGGAAGASSLF), 257–278 (FNISCVGIIVYRGLYFGMYDSL), and 292–312 (FASFGLGWLITNGAGLASYPI). Residues Arg-159 and Lys-171 each coordinate ADP. Arg-316 serves as a coordination point for ADP. An important for transport activity region spans residues 316–321 (RRRMMM). The Nucleotide carrier signature motif motif lies at 316–321 (RRRMMM). Residues 352–372 (AGANILRAVAGAGVLAGYDKL) traverse the membrane as a helical segment.

This sequence belongs to the mitochondrial carrier (TC 2.A.29) family. In terms of assembly, monomer.

It localises to the mitochondrion inner membrane. It catalyses the reaction ADP(in) + ATP(out) = ADP(out) + ATP(in). The matrix-open state (m-state) is inhibited by the membrane-permeable bongkrekic acid (BKA). The cytoplasmic-open state (c-state) is inhibited by the membrane-impermeable toxic inhibitor carboxyatractyloside (CATR). ADP:ATP antiporter that mediates import of ADP into the mitochondrial matrix for ATP synthesis, and export of ATP out to fuel the cell. Cycles between the cytoplasmic-open state (c-state) and the matrix-open state (m-state): operates by the alternating access mechanism with a single substrate-binding site intermittently exposed to either the cytosolic (c-state) or matrix (m-state) side of the inner mitochondrial membrane. This Solanum tuberosum (Potato) protein is ADP,ATP carrier protein, mitochondrial (ANT).